We begin with the raw amino-acid sequence, 101 residues long: Urease subunit beta (101 aa).

Belongs to the urease beta subunit family. Heterotrimer of UreA (gamma), UreB (beta) and UreC (alpha) subunits. Three heterotrimers associate to form the active enzyme.

The protein localises to the cytoplasm. It catalyses the reaction urea + 2 H2O + H(+) = hydrogencarbonate + 2 NH4(+). It functions in the pathway nitrogen metabolism; urea degradation; CO(2) and NH(3) from urea (urease route): step 1/1. The chain is Urease subunit beta from Paraburkholderia phymatum (strain DSM 17167 / CIP 108236 / LMG 21445 / STM815) (Burkholderia phymatum).